The sequence spans 262 residues: Small ribosomal subunit protein eS4x (262 aa).

One can recognise an S4 RNA-binding domain in the interval 42 to 104; it reads LPLVLIIRNR…TNENFRLLYD (63 aa).

This sequence belongs to the eukaryotic ribosomal protein eS4 family.

Its subcellular location is the cytoplasm. This Arabidopsis thaliana (Mouse-ear cress) protein is Small ribosomal subunit protein eS4x (RPS4D).